The following is a 316-amino-acid chain: tRNA dimethylallyltransferase (316 aa).

An ATP-binding site is contributed by 13-20 (GPTAVGKT). 15 to 20 (TAVGKT) contributes to the substrate binding site. Residues 38-41 (DSIQ) form an interaction with substrate tRNA region.

It belongs to the IPP transferase family. Monomer. It depends on Mg(2+) as a cofactor.

It catalyses the reaction adenosine(37) in tRNA + dimethylallyl diphosphate = N(6)-dimethylallyladenosine(37) in tRNA + diphosphate. Functionally, catalyzes the transfer of a dimethylallyl group onto the adenine at position 37 in tRNAs that read codons beginning with uridine, leading to the formation of N6-(dimethylallyl)adenosine (i(6)A). The polypeptide is tRNA dimethylallyltransferase (Staphylococcus carnosus (strain TM300)).